Consider the following 249-residue polypeptide: Probable endopeptidase YafL (249 aa).

The N-terminal stretch at 1 to 17 is a signal peptide; sequence MSLPSIPSFVLSGLLLI. Residue cysteine 18 is the site of N-palmitoyl cysteine attachment. Residue cysteine 18 is the site of S-diacylglycerol cysteine attachment. In terms of domain architecture, NlpC/P60 spans 116-243; that stretch reads HNITEVAIHR…DHFLGARRIL (128 aa). Cysteine 147 (nucleophile) is an active-site residue. The Proton acceptor role is filled by histidine 202. Glutamate 214 is a catalytic residue.

Belongs to the peptidase C40 family.

The protein localises to the cell membrane. The sequence is that of Probable endopeptidase YafL (yafL) from Escherichia coli (strain K12).